Reading from the N-terminus, the 367-residue chain is 4-hydroxy-3-methylbut-2-en-1-yl diphosphate synthase (flavodoxin) (367 aa).

Positions 270, 273, 305, and 312 each coordinate [4Fe-4S] cluster.

It belongs to the IspG family. The cofactor is [4Fe-4S] cluster.

The catalysed reaction is (2E)-4-hydroxy-3-methylbut-2-enyl diphosphate + oxidized [flavodoxin] + H2O + 2 H(+) = 2-C-methyl-D-erythritol 2,4-cyclic diphosphate + reduced [flavodoxin]. It participates in isoprenoid biosynthesis; isopentenyl diphosphate biosynthesis via DXP pathway; isopentenyl diphosphate from 1-deoxy-D-xylulose 5-phosphate: step 5/6. In terms of biological role, converts 2C-methyl-D-erythritol 2,4-cyclodiphosphate (ME-2,4cPP) into 1-hydroxy-2-methyl-2-(E)-butenyl 4-diphosphate. In Pasteurella multocida (strain Pm70), this protein is 4-hydroxy-3-methylbut-2-en-1-yl diphosphate synthase (flavodoxin).